Here is an 88-residue protein sequence, read N- to C-terminus: Large ribosomal subunit protein bL27 (88 aa).

The protein belongs to the bacterial ribosomal protein bL27 family.

This chain is Large ribosomal subunit protein bL27, found in Parabacteroides distasonis (strain ATCC 8503 / DSM 20701 / CIP 104284 / JCM 5825 / NCTC 11152).